We begin with the raw amino-acid sequence, 417 residues long: Phosphoglycerate kinase (417 aa).

Residues Val23, Asp24, Phe25, Asn26, Gln38, Arg39, Ser62, His63, Gly65, Arg66, Leu122, Arg123, His170, and Arg171 each coordinate (2R)-3-phosphoglycerate. Gly214 is a binding site for ADP. Gly214 contacts CDP. 2 residues coordinate AMP: Ala215 and Lys216. Ala215 contacts ATP. Ala215 is a binding site for Mg(2+). Asp219 is a binding site for CDP. A Mg(2+)-binding site is contributed by Asp219. Lys220 contacts AMP. Position 220 (Lys220) interacts with ATP. Gly238 provides a ligand contact to ADP. A CDP-binding site is contributed by Gly238. AMP-binding residues include Gly239 and Gly313. The ATP site is built by Gly239 and Gly313. Positions 338, 340, and 343 each coordinate CDP. Phe343 is a binding site for ADP. Glu344 contacts AMP. Positions 344, 375, and 376 each coordinate ATP. Position 375 (Asp375) interacts with Mg(2+).

The protein belongs to the phosphoglycerate kinase family. In terms of assembly, monomer. It depends on Mg(2+) as a cofactor.

It is found in the cytoplasm. It carries out the reaction (2R)-3-phosphoglycerate + ATP = (2R)-3-phospho-glyceroyl phosphate + ADP. The protein operates within carbohydrate degradation; glycolysis; pyruvate from D-glyceraldehyde 3-phosphate: step 2/5. Its function is as follows. Catalyzes one of the two ATP producing reactions in the glycolytic pathway via the reversible conversion of 1,3-diphosphoglycerate to 3-phosphoglycerate. In addition to its role as a glycolytic enzyme, it seems that PGK-1 acts as a polymerase alpha cofactor protein (primer recognition protein). May play a role in sperm motility. The polypeptide is Phosphoglycerate kinase (PGK) (Gallus gallus (Chicken)).